The following is a 108-amino-acid chain: uncharacterized protein (108 aa).

Residues 10–32 (LQAPYILCTSFITLKIHNFFFFF) traverse the membrane as a helical segment.

The protein localises to the membrane. This is an uncharacterized protein from Saccharomyces cerevisiae (strain ATCC 204508 / S288c) (Baker's yeast).